A 358-amino-acid polypeptide reads, in one-letter code: ATPase ASNA1 homolog (358 aa).

35–42 (KGGVGKTT) lines the ATP pocket. Residue D64 is part of the active site. E235 and N262 together coordinate ATP.

The protein belongs to the arsA ATPase family. In terms of assembly, homodimer.

It localises to the cytoplasm. Its subcellular location is the endoplasmic reticulum. Its function is as follows. ATPase required for the post-translational delivery of tail-anchored (TA) proteins to the endoplasmic reticulum. Recognizes and selectively binds the transmembrane domain of TA proteins in the cytosol. This complex then targets to the endoplasmic reticulum by membrane-bound receptors, where the tail-anchored protein is released for insertion. This process is regulated by ATP binding and hydrolysis. ATP binding drives the homodimer towards the closed dimer state, facilitating recognition of newly synthesized TA membrane proteins. ATP hydrolysis is required for insertion. Subsequently, the homodimer reverts towards the open dimer state, lowering its affinity for the membrane-bound receptor, and returning it to the cytosol to initiate a new round of targeting. The chain is ATPase ASNA1 homolog from Babesia bovis.